The following is a 78-amino-acid chain: DNA-directed RNA polymerase subunit omega (78 aa).

The protein belongs to the RNA polymerase subunit omega family. In cyanobacteria the RNAP catalytic core is composed of 2 alpha, 1 beta, 1 beta', 1 gamma and 1 omega subunit. When a sigma factor is associated with the core the holoenzyme is formed, which can initiate transcription.

It catalyses the reaction RNA(n) + a ribonucleoside 5'-triphosphate = RNA(n+1) + diphosphate. Its function is as follows. Promotes RNA polymerase assembly. Latches the N- and C-terminal regions of the beta' subunit thereby facilitating its interaction with the beta and alpha subunits. The protein is DNA-directed RNA polymerase subunit omega of Trichormus variabilis (strain ATCC 29413 / PCC 7937) (Anabaena variabilis).